Reading from the N-terminus, the 48-residue chain is Large ribosomal subunit protein bL32c (48 aa).

The protein belongs to the bacterial ribosomal protein bL32 family.

The protein localises to the plastid. It localises to the chloroplast. The chain is Large ribosomal subunit protein bL32c (rpl32) from Vicia faba (Broad bean).